We begin with the raw amino-acid sequence, 307 residues long: Protein TIPIN homolog (307 aa).

Disordered stretches follow at residues 1-50 and 252-279; these read MASL…SQDA and ASMD…LSNE. A compositionally biased stretch (pro residues) spans 262 to 271; the sequence is PLPPSQPPTP.

Belongs to the CSM3 family.

It is found in the cytoplasm. The protein localises to the nucleus. Required for normal progression of S-phase. Important for cell survival after DNA damage or replication stress. This is Protein TIPIN homolog from Drosophila melanogaster (Fruit fly).